A 232-amino-acid polypeptide reads, in one-letter code: MIFNVLTIFPQMFPGPLGVSNLGSALKKGLWTLNVFDIRAFANNKHNTVDDTPYGGGPGMLLRADVLGRCIDEVLSLHPNTKLMFTSPRGVSFTQDIARQTMNFDNITLLCGRFEGIDERVVDFYKLQEVSIGDYVLSGGELAAMVIIDTCVRMVPGVIGNAESLKQESMEGSLEYPQYTRPASWKGMEVPEVLLTGNHGEIEKWRRNASLSITAARRPDLLKDRYGENDVE.

Residues Gly112 and 132-137 (IGDYVL) contribute to the S-adenosyl-L-methionine site.

The protein belongs to the RNA methyltransferase TrmD family. Homodimer.

The protein resides in the cytoplasm. It carries out the reaction guanosine(37) in tRNA + S-adenosyl-L-methionine = N(1)-methylguanosine(37) in tRNA + S-adenosyl-L-homocysteine + H(+). In terms of biological role, specifically methylates guanosine-37 in various tRNAs. The sequence is that of tRNA (guanine-N(1)-)-methyltransferase from Anaplasma phagocytophilum (strain HZ).